We begin with the raw amino-acid sequence, 100 residues long: Urease subunit gamma (100 aa).

It belongs to the urease gamma subunit family. In terms of assembly, heterotrimer of UreA (gamma), UreB (beta) and UreC (alpha) subunits. Three heterotrimers associate to form the active enzyme.

Its subcellular location is the cytoplasm. It carries out the reaction urea + 2 H2O + H(+) = hydrogencarbonate + 2 NH4(+). The protein operates within nitrogen metabolism; urea degradation; CO(2) and NH(3) from urea (urease route): step 1/1. This chain is Urease subunit gamma, found in Acinetobacter baylyi (strain ATCC 33305 / BD413 / ADP1).